A 130-amino-acid chain; its full sequence is Anti-adapter protein IraD (130 aa).

Belongs to the GpW/Gp25 family. IraD subfamily. Interacts with RssB.

It is found in the cytoplasm. Its function is as follows. Inhibits RpoS proteolysis by regulating RssB activity, thereby increasing the stability of the sigma stress factor RpoS during oxidative stress. Its effect on RpoS stability is due to its interaction with RssB, which probably blocks the interaction of RssB with RpoS, and the consequent delivery of the RssB-RpoS complex to the ClpXP protein degradation pathway. This is Anti-adapter protein IraD from Shigella boydii serotype 4 (strain Sb227).